Consider the following 298-residue polypeptide: 4-hydroxybenzoate octaprenyltransferase (298 aa).

The next 7 membrane-spanning stretches (helical) occupy residues 30–50, 54–74, 105–125, 148–168, 218–238, 240–260, and 275–295; these read IGTWLLMWPTLWALWLAAEGI, GTLLIFVIGVYVMRAAGCVVN, VLFAGLVIIAFGLVCLTNLPT, FPQVVLGAAFSWGIPMAFMAI, DRLMIGLLQALTLLLLAWVGL, LALGGFFWLGLAAMGAIFVFQ, and AFLNNHWAGLVVFAGIALSLW.

Belongs to the UbiA prenyltransferase family. It depends on Mg(2+) as a cofactor.

Its subcellular location is the cell inner membrane. The enzyme catalyses all-trans-octaprenyl diphosphate + 4-hydroxybenzoate = 4-hydroxy-3-(all-trans-octaprenyl)benzoate + diphosphate. The protein operates within cofactor biosynthesis; ubiquinone biosynthesis. Functionally, catalyzes the prenylation of para-hydroxybenzoate (PHB) with an all-trans polyprenyl group. Mediates the second step in the final reaction sequence of ubiquinone-8 (UQ-8) biosynthesis, which is the condensation of the polyisoprenoid side chain with PHB, generating the first membrane-bound Q intermediate 3-octaprenyl-4-hydroxybenzoate. The polypeptide is 4-hydroxybenzoate octaprenyltransferase (Chromohalobacter salexigens (strain ATCC BAA-138 / DSM 3043 / CIP 106854 / NCIMB 13768 / 1H11)).